A 330-amino-acid chain; its full sequence is MKLKVFNVREEEATLAQDWANRNHVELSMSEGPLTLETVNEVEGFDGIANAQIGPLDDAIYPLLKEMGIKQIAQRSAGVDMYNLELAKQHGIIISNVPSYSPESIAEFTVTIALNLIRKVELIRANVREQNFSWTLPIRGRVLGNMTVAIIGTGRIGLATAKIFKGFGCRVIGYDIYHNPMADGILEYVNSVEEAVEKADLVSLHMPPTAENTHLFNLDMFKQFKKGAILMNMARGALVETKDLLEALDQGLLEGAGIDTYEFEGPYIPKNCQGQDISDKDFLRLINHPKVIYTPHAAYYTDEAVKNLVEGALNACVEVVETGTTTTRVN.

Residues 155 to 156, Asp-175, 206 to 207, Asn-212, 233 to 235, and Asp-259 each bind NAD(+); these read RI, MP, and MAR. Arg-235 is a catalytic residue. Glu-264 is a catalytic residue. Catalysis depends on His-296, which acts as the Proton donor.

The protein belongs to the D-isomer specific 2-hydroxyacid dehydrogenase family.

The enzyme catalyses (R)-lactate + NAD(+) = pyruvate + NADH + H(+). In Streptococcus agalactiae serotype III (strain NEM316), this protein is D-lactate dehydrogenase (ldhD).